The primary structure comprises 715 residues: Zinc finger protein 544 (715 aa).

The KRAB domain maps to 14-85 (VCFEDVAMAF…EQEAPRDWKA (72 aa)). Residues lysine 273 and lysine 289 each participate in a glycyl lysine isopeptide (Lys-Gly) (interchain with G-Cter in SUMO2) cross-link. The C2H2-type 1; atypical zinc-finger motif lies at 354-374 (SVCNQCGKSFSCCKLIHQRTH). C2H2-type zinc fingers lie at residues 380 to 402 (FECT…QRTH), 408 to 430 (YECD…QRIH), 436 to 458 (YQCI…QRIH), 464 to 486 (YECT…KRTH), 492 to 514 (FKCT…QRTH), 520 to 542 (YECN…QRIH), 548 to 570 (YQCI…QRIH), 576 to 598 (YDCT…KRTH), 604 to 626 (YECN…LQIH), 632 to 654 (YKCN…QRTH), 660 to 682 (FECS…HRIH), and 688 to 710 (YECS…RRTH). Lysine 534 participates in a covalent cross-link: Glycyl lysine isopeptide (Lys-Gly) (interchain with G-Cter in SUMO2).

The protein belongs to the krueppel C2H2-type zinc-finger protein family.

The protein localises to the nucleus. In terms of biological role, may be involved in transcriptional regulation. The polypeptide is Zinc finger protein 544 (ZNF544) (Homo sapiens (Human)).